Consider the following 20-residue polypeptide: Haemoporin (20 aa).

Residues 1 to 20 (AAVPEAAAEATAEAAPVSEF) form a disordered region.

Homopentamer. Forms a cylindrical structure with a central pore. As to expression, detected in the hemolymph.

It is found in the secreted. This chain is Haemoporin, found in Aplysia californica (California sea hare).